A 746-amino-acid chain; its full sequence is Polyribonucleotide nucleotidyltransferase (746 aa).

2 residues coordinate Mg(2+): Asp-493 and Asp-499. The 60-residue stretch at 560 to 619 (PRIITLQINPEKIGALIGPGGKTIRSITEATGAQIDIEEDGRVYISTADAAAAQQAVAMV) folds into the KH domain. The region spanning 629-698 (GDIFLGKVVR…GTGKVSLSRR (70 aa)) is the S1 motif domain. A disordered region spans residues 704-746 (ETAEDRRAAGAGRGLRDGGRSSGSERSGDRSPRSDDRPRPRRR). Basic and acidic residues-rich tracts occupy residues 706 to 722 (AEDR…RDGG) and 729 to 746 (RSGD…PRRR).

The protein belongs to the polyribonucleotide nucleotidyltransferase family. Mg(2+) is required as a cofactor.

The protein resides in the cytoplasm. The catalysed reaction is RNA(n+1) + phosphate = RNA(n) + a ribonucleoside 5'-diphosphate. Involved in mRNA degradation. Catalyzes the phosphorolysis of single-stranded polyribonucleotides processively in the 3'- to 5'-direction. This Roseiflexus castenholzii (strain DSM 13941 / HLO8) protein is Polyribonucleotide nucleotidyltransferase.